Reading from the N-terminus, the 132-residue chain is D-ribose pyranase (132 aa).

Histidine 20 functions as the Proton donor in the catalytic mechanism. Substrate is bound by residues aspartate 28, histidine 98, and 121 to 123; that span reads YSN.

The protein belongs to the RbsD / FucU family. RbsD subfamily. As to quaternary structure, homodecamer.

It is found in the cytoplasm. The enzyme catalyses beta-D-ribopyranose = beta-D-ribofuranose. Its pathway is carbohydrate metabolism; D-ribose degradation; D-ribose 5-phosphate from beta-D-ribopyranose: step 1/2. Functionally, catalyzes the interconversion of beta-pyran and beta-furan forms of D-ribose. In Kosmotoga olearia (strain ATCC BAA-1733 / DSM 21960 / TBF 19.5.1), this protein is D-ribose pyranase.